Here is a 177-residue protein sequence, read N- to C-terminus: Large ribosomal subunit protein uL6 (177 aa).

It belongs to the universal ribosomal protein uL6 family. In terms of assembly, part of the 50S ribosomal subunit.

In terms of biological role, this protein binds to the 23S rRNA, and is important in its secondary structure. It is located near the subunit interface in the base of the L7/L12 stalk, and near the tRNA binding site of the peptidyltransferase center. The protein is Large ribosomal subunit protein uL6 of Nitrobacter winogradskyi (strain ATCC 25391 / DSM 10237 / CIP 104748 / NCIMB 11846 / Nb-255).